The sequence spans 437 residues: Phosphoethanolamine N-methyltransferase 2 (437 aa).

N-methylethanolamine phosphate contacts are provided by residues 186–187 and Tyr195; that span reads QY. Residues 204-205, Gly232, Asp254, 281-282, and Arg298 contribute to the S-adenosyl-L-homocysteine site; these read IS and DA. Residues Tyr329, Tyr343, 347–349, and Lys415 contribute to the N-methylethanolamine phosphate site; that span reads RAY.

It belongs to the class I-like SAM-binding methyltransferase superfamily.

It carries out the reaction N-methylethanolamine phosphate + S-adenosyl-L-methionine = N,N-dimethylethanolamine phosphate + S-adenosyl-L-homocysteine + H(+). It catalyses the reaction N,N-dimethylethanolamine phosphate + S-adenosyl-L-methionine = phosphocholine + S-adenosyl-L-homocysteine + H(+). Its pathway is phospholipid metabolism; phosphatidylcholine biosynthesis; phosphocholine from phosphoethanolamine. Its activity is regulated as follows. Feedback inhibition by phosphatidylcholine and also by S-adenosylhomocysteine. Functionally, catalyzes the last two methylation reactions in the synthesis of phosphocholine, by converting phospho-monomethylethanolamine (N-methylethanolamine phosphate) into phospho-dimethylethanolamine (N,N-dimethylethanolamine phosphate) and the latter into phosphocholine. Phosphocholine is a precursor for phosphatidylcholine, a major component in membranes and a precursor itself in the production of glycoconjugates secreted by parasitic nematodes to avoid host immune responses. This is Phosphoethanolamine N-methyltransferase 2 from Caenorhabditis elegans.